We begin with the raw amino-acid sequence, 29 residues long: Conotoxin SIVC (29 aa).

Ala-1 is subject to N-acetylalanine; partial. Pro-2 is subject to 4-hydroxyproline. 2 O-linked (HexNAc...) threonine glycosylation sites follow: Thr-7 and Thr-9. Residues Pro-18 and Pro-22 each carry the 4-hydroxyproline modification. Cys-29 carries the cysteine amide modification.

It belongs to the conotoxin A superfamily. Post-translationally, O-linked glycans consist of Hex4-HexNAc2 hexasaccharides. N-terminus is found to be free and N-acetylated, depending on the fraction studied. In terms of processing, contains 3 disulfide bonds. Expressed by the venom duct. Low expression in the distal venom duct sections.

The protein localises to the secreted. Probable neurotoxin with ion channel inhibitor activity. This is Conotoxin SIVC from Conus striatus (Striated cone).